The following is a 185-amino-acid chain: Large ribosomal subunit protein uL5 (185 aa).

Belongs to the universal ribosomal protein uL5 family. As to quaternary structure, part of the 50S ribosomal subunit; part of the 5S rRNA/L5/L18/L25 subcomplex. Contacts the 5S rRNA and the P site tRNA. Forms a bridge to the 30S subunit in the 70S ribosome.

This is one of the proteins that bind and probably mediate the attachment of the 5S RNA into the large ribosomal subunit, where it forms part of the central protuberance. In the 70S ribosome it contacts protein S13 of the 30S subunit (bridge B1b), connecting the 2 subunits; this bridge is implicated in subunit movement. Contacts the P site tRNA; the 5S rRNA and some of its associated proteins might help stabilize positioning of ribosome-bound tRNAs. The chain is Large ribosomal subunit protein uL5 from Rhizobium johnstonii (strain DSM 114642 / LMG 32736 / 3841) (Rhizobium leguminosarum bv. viciae).